A 136-amino-acid chain; its full sequence is Histone H3.1 (136 aa).

Positions 1–43 are disordered; sequence MARTKQTARKSTGGKAPRKQLATKAARKSAPATGGVKKPHRYR. R3 carries the post-translational modification Asymmetric dimethylarginine; by PRMT6; alternate. R3 carries the citrulline; alternate modification. The residue at position 4 (T4) is a Phosphothreonine; by HASPIN and VRK1. K5 carries the allysine; alternate modification. Position 5 is an N6,N6,N6-trimethyllysine; alternate (K5). N6,N6-dimethyllysine; alternate is present on K5. K5 carries the post-translational modification N6-(2-hydroxyisobutyryl)lysine; alternate. N6-(beta-hydroxybutyryl)lysine; alternate is present on K5. An N6-acetyllysine; alternate modification is found at K5. An N6-crotonyllysine; alternate modification is found at K5. Residue K5 is modified to N6-methyllysine; alternate. At Q6 the chain carries 5-glutamyl dopamine; alternate. A 5-glutamyl serotonin; alternate modification is found at Q6. At T7 the chain carries Phosphothreonine; by PKC. R9 is subject to Citrulline; alternate. R9 bears the Symmetric dimethylarginine; by PRMT5; alternate mark. N6,N6,N6-trimethyllysine; alternate is present on K10. Residue K10 is modified to N6,N6-dimethyllysine; alternate. Residue K10 is modified to N6-(2-hydroxyisobutyryl)lysine; alternate. Position 10 is an N6-(beta-hydroxybutyryl)lysine; alternate (K10). The residue at position 10 (K10) is an N6-acetyllysine; alternate. At K10 the chain carries N6-crotonyllysine; alternate. K10 is modified (N6-methyllysine; alternate). At K10 the chain carries N6-butyryllysine; alternate. K10 carries the post-translational modification N6-lactoyllysine; alternate. The residue at position 11 (S11) is an ADP-ribosylserine; alternate. At S11 the chain carries Phosphoserine; alternate; by AURKB, AURKC, RPS6KA3, RPS6KA4 and RPS6KA5. T12 is modified (phosphothreonine; by PKC and CHEK1). Residue K15 is modified to N6-(2-hydroxyisobutyryl)lysine; alternate. N6-(beta-hydroxybutyryl)lysine; alternate is present on K15. K15 carries the post-translational modification N6-acetyllysine; alternate. An N6-lactoyllysine; alternate modification is found at K15. K15 is modified (N6-glutaryllysine; alternate). An N6-succinyllysine; alternate modification is found at K15. R18 is modified (citrulline; alternate). Residue R18 is modified to Asymmetric dimethylarginine; by CARM1; alternate. K19 and K24 each carry N6-(2-hydroxyisobutyryl)lysine; alternate. N6-(beta-hydroxybutyryl)lysine; alternate is present on residues K19 and K24. 2 positions are modified to N6-acetyllysine; alternate: K19 and K24. N6-crotonyllysine; alternate occurs at positions 19 and 24. N6-methyllysine; alternate occurs at positions 19 and 24. N6-butyryllysine; alternate is present on residues K19 and K24. K19 and K24 each carry N6-lactoyllysine; alternate. N6-glutaryllysine; alternate occurs at positions 19 and 24. K19 is lipidated: N6-decanoyllysine. R27 bears the Citrulline mark. At K28 the chain carries N6,N6,N6-trimethyllysine; alternate. Position 28 is an N6,N6-dimethyllysine; alternate (K28). K28 is modified (N6-(2-hydroxyisobutyryl)lysine; alternate). Position 28 is an N6-(beta-hydroxybutyryl)lysine; alternate (K28). Residue K28 is modified to N6-acetyllysine; alternate. K28 bears the N6-crotonyllysine; alternate mark. K28 is subject to N6-methyllysine; alternate. The residue at position 28 (K28) is an N6-lactoyllysine; alternate. An N6-glutaryllysine; alternate modification is found at K28. Residue S29 is modified to ADP-ribosylserine; alternate. S29 bears the Phosphoserine; alternate; by AURKB, AURKC and RPS6KA5 mark. K37 carries the post-translational modification N6,N6,N6-trimethyllysine; alternate. K37 bears the N6,N6-dimethyllysine; alternate mark. K37 carries the N6-(2-hydroxyisobutyryl)lysine; alternate modification. Residue K37 is modified to N6-acetyllysine; alternate. N6-methyllysine; alternate is present on K37. K38 bears the N6-methyllysine mark. Y42 carries the phosphotyrosine modification. K57 is subject to N6,N6,N6-trimethyllysine; alternate. K57 is subject to N6-(2-hydroxyisobutyryl)lysine; alternate. K57 is subject to N6-(beta-hydroxybutyryl)lysine; alternate. K57 carries the post-translational modification N6-acetyllysine; alternate. An N6-crotonyllysine; alternate modification is found at K57. K57 is subject to N6-lactoyllysine; alternate. N6-glutaryllysine; alternate is present on K57. The residue at position 57 (K57) is an N6-succinyllysine; alternate. An N6-methyllysine; by EHMT2; alternate modification is found at K57. S58 bears the Phosphoserine mark. 2 positions are modified to N6-(2-hydroxyisobutyryl)lysine; alternate: K65 and K80. N6-methyllysine; alternate occurs at positions 65 and 80. K80 is modified (N6,N6,N6-trimethyllysine; alternate). At K80 the chain carries N6,N6-dimethyllysine; alternate. K80 carries the N6-(beta-hydroxybutyryl)lysine; alternate modification. K80 is subject to N6-acetyllysine; alternate. Position 80 is an N6-lactoyllysine; alternate (K80). The residue at position 80 (K80) is an N6-glutaryllysine; alternate. The residue at position 80 (K80) is an N6-succinyllysine; alternate. T81 carries the phosphothreonine modification. A Phosphoserine modification is found at S87. T108 bears the Phosphothreonine mark. K116 and K123 each carry N6-acetyllysine; alternate. K116 and K123 each carry N6-glutaryllysine; alternate. Residue K123 is modified to N6-(2-hydroxyisobutyryl)lysine; alternate. Residue K123 is modified to N6-(beta-hydroxybutyryl)lysine; alternate. Position 123 is an N6-methyllysine; alternate (K123). K123 is modified (N6-succinyllysine; alternate).

It belongs to the histone H3 family. The nucleosome is a histone octamer containing two molecules each of H2A, H2B, H3 and H4 assembled in one H3-H4 heterotetramer and two H2A-H2B heterodimers. The octamer wraps approximately 147 bp of DNA. Interacts with TONSL; CHAF1A; CHAF1B; MCM2 and DNAJC9. Interacts with NASP; NASP is a histone chaperone that stabilizes and maintains a soluble pool of Histone H3-H4 dimers. In terms of processing, acetylation is generally linked to gene activation. Acetylation on Lys-10 (H3K9ac) impairs methylation at Arg-9 (H3R8me2s). Acetylation on Lys-19 (H3K18ac) and Lys-24 (H3K24ac) favors methylation at Arg-18 (H3R17me). Acetylation at Lys-123 (H3K122ac) by EP300/p300 plays a central role in chromatin structure: localizes at the surface of the histone octamer and stimulates transcription, possibly by promoting nucleosome instability. Citrullination at Arg-9 (H3R8ci) and/or Arg-18 (H3R17ci) by PADI4 impairs methylation and represses transcription. Post-translationally, asymmetric dimethylation at Arg-18 (H3R17me2a) by CARM1 is linked to gene activation. Symmetric dimethylation at Arg-9 (H3R8me2s) by PRMT5 is linked to gene repression. Asymmetric dimethylation at Arg-3 (H3R2me2a) by PRMT6 is linked to gene repression and is mutually exclusive with H3 Lys-5 methylation (H3K4me2 and H3K4me3). H3R2me2a is present at the 3' of genes regardless of their transcription state and is enriched on inactive promoters, while it is absent on active promoters. In terms of processing, methylation at Lys-5 (H3K4me), Lys-37 (H3K36me) and Lys-80 (H3K79me) are linked to gene activation. Methylation at Lys-5 (H3K4me) facilitates subsequent acetylation of H3 and H4. Methylation at Lys-80 (H3K79me) is associated with DNA double-strand break (DSB) responses and is a specific target for TP53BP1. Methylation at Lys-10 (H3K9me) and Lys-28 (H3K27me) are linked to gene repression. Methylation at Lys-10 (H3K9me) is a specific target for HP1 proteins (CBX1, CBX3 and CBX5) and prevents subsequent phosphorylation at Ser-11 (H3S10ph) and acetylation of H3 and H4. Methylation at Lys-5 (H3K4me) and Lys-80 (H3K79me) require preliminary monoubiquitination of H2B at 'Lys-120'. Methylation at Lys-10 (H3K9me) and Lys-28 (H3K27me) are enriched in inactive X chromosome chromatin. Monomethylation at Lys-57 (H3K56me1) by EHMT2/G9A in G1 phase promotes interaction with PCNA and is required for DNA replication. Phosphorylated at Thr-4 (H3T3ph) by VRK1. Phosphorylated at Thr-4 (H3T3ph) by HASPIN during prophase and dephosphorylated during anaphase. Phosphorylation at Ser-11 (H3S10ph) by AURKB is crucial for chromosome condensation and cell-cycle progression during mitosis and meiosis. In addition phosphorylation at Ser-11 (H3S10ph) by RPS6KA4 and RPS6KA5 is important during interphase because it enables the transcription of genes following external stimulation, like mitogens, stress, growth factors or UV irradiation and result in the activation of genes, such as c-fos and c-jun. Phosphorylation at Ser-11 (H3S10ph), which is linked to gene activation, prevents methylation at Lys-10 (H3K9me) but facilitates acetylation of H3 and H4. Phosphorylation at Ser-11 (H3S10ph) by AURKB mediates the dissociation of HP1 proteins (CBX1, CBX3 and CBX5) from heterochromatin. Phosphorylation at Ser-11 (H3S10ph) is also an essential regulatory mechanism for neoplastic cell transformation. Phosphorylated at Ser-29 (H3S28ph) by MAP3K20 isoform 1, RPS6KA5 or AURKB during mitosis or upon ultraviolet B irradiation. Phosphorylation at Thr-7 (H3T6ph) by PRKCB is a specific tag for epigenetic transcriptional activation that prevents demethylation of Lys-5 (H3K4me) by LSD1/KDM1A. At centromeres, specifically phosphorylated at Thr-12 (H3T11ph) from prophase to early anaphase, by DAPK3 and PKN1. Phosphorylation at Thr-12 (H3T11ph) by PKN1 or isoform M2 of PKM (PKM2) is a specific tag for epigenetic transcriptional activation that promotes demethylation of Lys-10 (H3K9me) by KDM4C/JMJD2C. Phosphorylation at Thr-12 (H3T11ph) by chromatin-associated CHEK1 regulates the transcription of cell cycle regulatory genes by modulating acetylation of Lys-10 (H3K9ac). Phosphorylation at Tyr-42 (H3Y41ph) by JAK2 promotes exclusion of CBX5 (HP1 alpha) from chromatin. Post-translationally, monoubiquitinated by RAG1 in lymphoid cells, monoubiquitination is required for V(D)J recombination. Ubiquitinated by the CUL4-DDB-RBX1 complex in response to ultraviolet irradiation. This may weaken the interaction between histones and DNA and facilitate DNA accessibility to repair proteins. In terms of processing, lysine deamination at Lys-5 (H3K4all) to form allysine is mediated by LOXL2. Allysine formation by LOXL2 only takes place on H3K4me3 and results in gene repression. Crotonylation (Kcr) is specifically present in male germ cells and marks testis-specific genes in post-meiotic cells, including X-linked genes that escape sex chromosome inactivation in haploid cells. Crotonylation marks active promoters and enhancers and confers resistance to transcriptional repressors. It is also associated with post-meiotically activated genes on autosomes. Post-translationally, butyrylation of histones marks active promoters and competes with histone acetylation. It is present during late spermatogenesis. In terms of processing, succinylation at Lys-80 (H3K79succ) by KAT2A takes place with a maximum frequency around the transcription start sites of genes. It gives a specific tag for epigenetic transcription activation. Desuccinylation at Lys-123 (H3K122succ) by SIRT7 in response to DNA damage promotes chromatin condensation and double-strand breaks (DSBs) repair. Serine ADP-ribosylation by PARP1 or PARP2 constitutes the primary form of ADP-ribosylation of proteins in response to DNA damage. Serine ADP-ribosylation at Ser-11 (H3S10ADPr) promotes recruitment of CHD1L. H3S10ADPr is mutually exclusive with phosphorylation at Ser-11 (H3S10ph) and impairs acetylation at Lys-10 (H3K9ac). Post-translationally, serotonylated by TGM2 at Gln-6 (H3Q5ser) during serotonergic neuron differentiation. H3Q5ser is associated with trimethylation of Lys-5 (H3K4me3) and enhances general transcription factor IID (TFIID) complex-binding to H3K4me3, thereby facilitating transcription. In terms of processing, dopaminylated by TGM2 at Gln-6 (H3Q5dop) in ventral tegmental area (VTA) neurons. H3Q5dop mediates neurotransmission-independent role of nuclear dopamine by regulating relapse-related transcriptional plasticity in the reward system. Lactylated in macrophages by EP300/P300 by using lactoyl-CoA directly derived from endogenous or exogenous lactate, leading to stimulates gene transcription.

Its subcellular location is the nucleus. The protein localises to the chromosome. Its function is as follows. Core component of nucleosome. Nucleosomes wrap and compact DNA into chromatin, limiting DNA accessibility to the cellular machineries which require DNA as a template. Histones thereby play a central role in transcription regulation, DNA repair, DNA replication and chromosomal stability. DNA accessibility is regulated via a complex set of post-translational modifications of histones, also called histone code, and nucleosome remodeling. This chain is Histone H3.1, found in Homo sapiens (Human).